Reading from the N-terminus, the 439-residue chain is 5-methylthioadenosine/S-adenosylhomocysteine deaminase (439 aa).

Residues His70 and His72 each coordinate Zn(2+). Positions 99 and 192 each coordinate substrate. His219 serves as a coordination point for Zn(2+). Residues Glu222 and Asp307 each contribute to the substrate site. Asp307 contributes to the Zn(2+) binding site.

Belongs to the metallo-dependent hydrolases superfamily. MTA/SAH deaminase family. Requires Zn(2+) as cofactor.

It carries out the reaction S-adenosyl-L-homocysteine + H2O + H(+) = S-inosyl-L-homocysteine + NH4(+). The catalysed reaction is S-methyl-5'-thioadenosine + H2O + H(+) = S-methyl-5'-thioinosine + NH4(+). Functionally, catalyzes the deamination of 5-methylthioadenosine and S-adenosyl-L-homocysteine into 5-methylthioinosine and S-inosyl-L-homocysteine, respectively. Is also able to deaminate adenosine. This chain is 5-methylthioadenosine/S-adenosylhomocysteine deaminase, found in Thermodesulfovibrio yellowstonii (strain ATCC 51303 / DSM 11347 / YP87).